A 977-amino-acid chain; its full sequence is Macrophage colony-stimulating factor 1 receptor (977 aa).

The N-terminal stretch at 1–19 (MELGPPLVLLLATVWHGQG) is a signal peptide. The Extracellular segment spans residues 20 to 515 (APVIEPSGPE…QLPDESLFTP (496 aa)). Ig-like C2-type domains are found at residues 24 to 104 (EPSG…VKDP), 107 to 197 (SWNL…KVNR), 204 to 298 (QIKL…VVES), 299 to 397 (AYLN…LTLR), and 398 to 503 (YPPE…SLGQ). 3 disulfide bridges follow: cysteine 42-cysteine 84, cysteine 127-cysteine 177, and cysteine 224-cysteine 278. Asparagine 45 and asparagine 73 each carry an N-linked (GlcNAc...) asparagine glycan. N-linked (GlcNAc...) asparagine glycosylation is found at asparagine 302, asparagine 335, asparagine 389, asparagine 410, asparagine 449, asparagine 478, and asparagine 491. Cysteine 417 and cysteine 483 form a disulfide bridge. Residues 516–536 (VVVACMSVMSLLVLLLLLLLY) form a helical membrane-spanning segment. The Cytoplasmic portion of the chain corresponds to 537–977 (KYKQKPKYQV…LLQPNNYQFC (441 aa)). A regulatory juxtamembrane domain region spans residues 540–572 (QKPKYQVRWKIIERYEGNSYTFIDPTQLPYNEK). Phosphotyrosine; by autocatalysis occurs at positions 544 and 559. One can recognise a Protein kinase domain in the interval 580 to 913 (LQFGKTLGAG…ICFLLQEQAR (334 aa)). Residues 586 to 594 (LGAGAFGKV) and lysine 614 each bind ATP. Phosphotyrosine; by autocatalysis is present on residues tyrosine 697 and tyrosine 706. Serine 711 is modified (phosphoserine). At tyrosine 721 the chain carries Phosphotyrosine; by autocatalysis. Residue aspartate 776 is the Proton acceptor of the active site. An activation loop region spans residues 794–816 (DFGLARDIMNDSNYVVKGNARLP). Phosphotyrosine; by autocatalysis occurs at positions 807 and 921. The tract at residues 921-957 (YANLPSSGGSSGSDSGGGSSGGSSSEPEEESSSEHLA) is disordered. The segment covering 929 to 941 (GSSGSDSGGGSSG) has biased composition (gly residues). Tyrosine 974 is subject to Phosphotyrosine; by autocatalysis.

It belongs to the protein kinase superfamily. Tyr protein kinase family. CSF-1/PDGF receptor subfamily. As to quaternary structure, monomer. Homodimer. Interacts with CSF1 and IL34. Interaction with dimeric CSF1 or IL34 leads to receptor homodimerization. Interacts with INPPL1/SHIP2 and THOC5. Interacts (tyrosine phosphorylated) with PLCG2 (via SH2 domain). Interacts (tyrosine phosphorylated) with PIK3R1 (via SH2 domain). Interacts (tyrosine phosphorylated) with FYN, YES1 and SRC (via SH2 domain). Interacts (tyrosine phosphorylated) with CBL, GRB2 and SLA2. In terms of processing, autophosphorylated in response to CSF1 or IL34 binding. Phosphorylation at Tyr-559 is important for normal down-regulation of signaling by ubiquitination, internalization and degradation. Phosphorylation at Tyr-559 and Tyr-807 is important for interaction with SRC family members, including FYN, YES1 and SRC, and for subsequent activation of these protein kinases. Phosphorylation at Tyr-697 and Tyr-921 is important for interaction with GRB2. Phosphorylation at Tyr-721 is important for interaction with PIK3R1. Phosphorylation at Tyr-721 and Tyr-807 is important for interaction with PLCG2. Phosphorylation at Tyr-974 is important for interaction with CBL. Dephosphorylation by PTPN2 negatively regulates downstream signaling and macrophage differentiation. Ubiquitinated. Becomes rapidly polyubiquitinated after autophosphorylation, leading to its degradation. Widely expressed.

Its subcellular location is the cell membrane. The enzyme catalyses L-tyrosyl-[protein] + ATP = O-phospho-L-tyrosyl-[protein] + ADP + H(+). With respect to regulation, present in an inactive conformation in the absence of bound ligand. CSF1 or IL34 binding leads to dimerization and activation by autophosphorylation on tyrosine residues. Inhibited by imatinib/STI-571 (Gleevec), dasatinib, sunitinib/SU11248, lestaurtinib/CEP-701, midostaurin/PKC-412, Ki20227, linifanib/ABT-869, Axitinib/AG013736, sorafenib/BAY 43-9006 and GW2580. Tyrosine-protein kinase that acts as a cell-surface receptor for CSF1 and IL34 and plays an essential role in the regulation of survival, proliferation and differentiation of hematopoietic precursor cells, especially mononuclear phagocytes, such as macrophages and monocytes. Promotes the release of pro-inflammatory chemokines in response to IL34 and CSF1, and thereby plays an important role in innate immunity and in inflammatory processes. Plays an important role in the regulation of osteoclast proliferation and differentiation, the regulation of bone resorption, and is required for normal bone and tooth development. Required for normal male and female fertility, and for normal development of milk ducts and acinar structures in the mammary gland during pregnancy. Promotes reorganization of the actin cytoskeleton, regulates formation of membrane ruffles, cell adhesion and cell migration, and promotes cancer cell invasion. Activates several signaling pathways in response to ligand binding, including the ERK1/2 and the JNK pathway. Phosphorylates PIK3R1, PLCG2, GRB2, SLA2 and CBL. Activation of PLCG2 leads to the production of the cellular signaling molecules diacylglycerol and inositol 1,4,5-trisphosphate, that then lead to the activation of protein kinase C family members, especially PRKCD. Phosphorylation of PIK3R1, the regulatory subunit of phosphatidylinositol 3-kinase, leads to activation of the AKT1 signaling pathway. Activated CSF1R also mediates activation of the MAP kinases MAPK1/ERK2 and/or MAPK3/ERK1, and of the SRC family kinases SRC, FYN and YES1. Activated CSF1R transmits signals both via proteins that directly interact with phosphorylated tyrosine residues in its intracellular domain, or via adapter proteins, such as GRB2. Promotes activation of STAT family members STAT3, STAT5A and/or STAT5B. Promotes tyrosine phosphorylation of SHC1 and INPP5D/SHIP-1. Receptor signaling is down-regulated by protein phosphatases, such as INPP5D/SHIP-1, that dephosphorylate the receptor and its downstream effectors, and by rapid internalization of the activated receptor. In the central nervous system, may play a role in the development of microglia macrophages. The sequence is that of Macrophage colony-stimulating factor 1 receptor (Csf1r) from Mus musculus (Mouse).